Consider the following 502-residue polypeptide: Large ribosomal subunit protein uL2m (502 aa).

The interval 458–502 (AMNPVDHPHGGGEGRTKGGRPSVSPWGKPTKAGFRAGVGVGKRRI) is disordered. Positions 463-473 (DHPHGGGEGRT) are enriched in basic and acidic residues. The span at 493–502 (AGVGVGKRRI) shows a compositional bias: gly residues.

The protein belongs to the universal ribosomal protein uL2 family.

The protein resides in the mitochondrion. This Oryza sativa (Rice) protein is Large ribosomal subunit protein uL2m (RPL2).